Consider the following 187-residue polypeptide: Dihydrofolate reductase type A10 (187 aa).

One can recognise a DHFR domain in the interval 2–174; that stretch reads NISLIFANEL…YSLSIDKFVR (173 aa).

This sequence belongs to the dihydrofolate reductase family. As to quaternary structure, homodimer.

The catalysed reaction is (6S)-5,6,7,8-tetrahydrofolate + NADP(+) = 7,8-dihydrofolate + NADPH + H(+). It functions in the pathway cofactor biosynthesis; tetrahydrofolate biosynthesis; 5,6,7,8-tetrahydrofolate from 7,8-dihydrofolate: step 1/1. Key enzyme in folate metabolism. Catalyzes an essential reaction for de novo glycine and purine synthesis, and for DNA precursor synthesis. The polypeptide is Dihydrofolate reductase type A10 (dfrA10) (Escherichia coli).